Consider the following 630-residue polypeptide: 1-deoxy-D-xylulose-5-phosphate synthase (630 aa).

Thiamine diphosphate is bound by residues H72 and 113–115 (GHS). Residue D144 coordinates Mg(2+). Residues 145-146 (GA), N173, Y284, and E367 each bind thiamine diphosphate. Mg(2+) is bound at residue N173.

This sequence belongs to the transketolase family. DXPS subfamily. Homodimer. Requires Mg(2+) as cofactor. The cofactor is thiamine diphosphate.

It carries out the reaction D-glyceraldehyde 3-phosphate + pyruvate + H(+) = 1-deoxy-D-xylulose 5-phosphate + CO2. Its pathway is metabolic intermediate biosynthesis; 1-deoxy-D-xylulose 5-phosphate biosynthesis; 1-deoxy-D-xylulose 5-phosphate from D-glyceraldehyde 3-phosphate and pyruvate: step 1/1. In terms of biological role, catalyzes the acyloin condensation reaction between C atoms 2 and 3 of pyruvate and glyceraldehyde 3-phosphate to yield 1-deoxy-D-xylulose-5-phosphate (DXP). The sequence is that of 1-deoxy-D-xylulose-5-phosphate synthase from Bacillus cytotoxicus (strain DSM 22905 / CIP 110041 / 391-98 / NVH 391-98).